A 146-amino-acid polypeptide reads, in one-letter code: Hemoglobin subunit beta (146 aa).

An N-acetylvaline modification is found at Val1. Residues 2–146 (HLTAEEKSLV…VANALAHKYH (145 aa)) form the Globin domain. Thr12 is modified (phosphothreonine). Ser44 is subject to Phosphoserine. N6-acetyllysine is present on Lys59. His63 provides a ligand contact to heme b. Lys82 is modified (N6-acetyllysine). His92 contacts heme b. S-nitrosocysteine is present on Cys93. Lys144 carries the N6-acetyllysine modification.

It belongs to the globin family. As to quaternary structure, heterotetramer of two alpha chains and two beta chains. As to expression, red blood cells.

Functionally, involved in oxygen transport from the lung to the various peripheral tissues. The chain is Hemoglobin subunit beta (HBB) from Vulpes vulpes (Red fox).